Reading from the N-terminus, the 201-residue chain is Protein CIMAP1C (201 aa).

The STPGR repeat unit spans residues 171 to 186 (PAPTMSSRSGHTSPAR). The tract at residues 172 to 201 (APTMSSRSGHTSPARLLSPWASSTRPTYAR) is disordered. Positions 191 to 201 (WASSTRPTYAR) are enriched in polar residues.

It belongs to the CIMAP family.

This Bos taurus (Bovine) protein is Protein CIMAP1C (CIMAP1C).